The following is a 70-amino-acid chain: Chondroitin proteoglycan 9 (70 aa).

An N-terminal signal peptide occupies residues 1-19; the sequence is MNFWHLLLLAVLFFVTVFG. Residues Ser-25 and Ser-27 are each glycosylated (O-linked (Xyl...) (chondroitin sulfate) serine).

This is Chondroitin proteoglycan 9 (cpg-9) from Caenorhabditis briggsae.